The chain runs to 350 residues: Biotin synthase (350 aa).

In terms of domain architecture, Radical SAM core spans 38–256 (NHVQVSTLLS…IAIARIMMPQ (219 aa)). [4Fe-4S] cluster contacts are provided by Cys53, Cys57, and Cys60. Residues Cys97, Cys128, Cys188, and Arg260 each contribute to the [2Fe-2S] cluster site.

Belongs to the radical SAM superfamily. Biotin synthase family. As to quaternary structure, homodimer. [4Fe-4S] cluster is required as a cofactor. It depends on [2Fe-2S] cluster as a cofactor.

It catalyses the reaction (4R,5S)-dethiobiotin + (sulfur carrier)-SH + 2 reduced [2Fe-2S]-[ferredoxin] + 2 S-adenosyl-L-methionine = (sulfur carrier)-H + biotin + 2 5'-deoxyadenosine + 2 L-methionine + 2 oxidized [2Fe-2S]-[ferredoxin]. It functions in the pathway cofactor biosynthesis; biotin biosynthesis; biotin from 7,8-diaminononanoate: step 2/2. Its function is as follows. Catalyzes the conversion of dethiobiotin (DTB) to biotin by the insertion of a sulfur atom into dethiobiotin via a radical-based mechanism. The chain is Biotin synthase from Vibrio parahaemolyticus serotype O3:K6 (strain RIMD 2210633).